We begin with the raw amino-acid sequence, 309 residues long: Tagatose-6-phosphate kinase (309 aa).

The protein belongs to the carbohydrate kinase PfkB family. LacC subfamily.

The enzyme catalyses D-tagatofuranose 6-phosphate + ATP = D-tagatofuranose 1,6-bisphosphate + ADP + H(+). It functions in the pathway carbohydrate metabolism; D-tagatose 6-phosphate degradation; D-glyceraldehyde 3-phosphate and glycerone phosphate from D-tagatose 6-phosphate: step 1/2. This chain is Tagatose-6-phosphate kinase, found in Streptococcus pneumoniae (strain Taiwan19F-14).